Reading from the N-terminus, the 283-residue chain is uncharacterized protein (283 aa).

Residue Asn-15 is glycosylated (N-linked (GlcNAc...) asparagine). The PQ-loop 1 domain occupies 15-81; the sequence is NATASTVFAI…QELNIALKVQ (67 aa). A run of 6 helical transmembrane segments spans residues 19-39, 48-68, 108-128, 138-158, 170-190, and 206-226; these read STVFAILGTVCWCVQLIPQII, EGLDTLFILSWVVASIPLSVY, ALFVVISFMLFSGGLQAMLIL, VEWPVVFMGVLATVLVNIGFL, VTGISYLFLAIDSSGSLFSFL, and GLLFIIEMGVFVLAFIFNVLL. Positions 149-204 constitute a PQ-loop 2 domain; the sequence is ATVLVNIGFLPQYISIFRARAVTGISYLFLAIDSSGSLFSFLSLPFDRWDVLAAVD. N-linked (GlcNAc...) asparagine glycosylation occurs at Asn-228.

It localises to the membrane. This is an uncharacterized protein from Schizosaccharomyces pombe (strain 972 / ATCC 24843) (Fission yeast).